The chain runs to 777 residues: Aminopeptidase P (777 aa).

The signal sequence occupies residues 1-17; that stretch reads MQLNFLLFVFIFLMVFH. Residue H551 coordinates substrate. 2 residues coordinate Mn(2+): D570 and D581. H640 contacts substrate. H644 lines the Mn(2+) pocket. H653 is a substrate binding site. Positions 676 and 690 each coordinate Mn(2+).

The protein belongs to the peptidase M24B family. In terms of assembly, homodimer. Mn(2+) is required as a cofactor. Post-translationally, the N-terminus may be proteolytically cleaved to generate a 73-kDa mature form.

The protein resides in the vacuole lumen. Its subcellular location is the cytoplasm. The catalysed reaction is Release of any N-terminal amino acid, including proline, that is linked to proline, even from a dipeptide or tripeptide.. Its activity is regulated as follows. Partially activated by Co(2+) and Mg(2+) has no effect. Inhibited by 1 mM Zn(2+), Ni(2+), or Cu(2+). Inhibited by apstatin, a non-hydrolysable peptide analog. Catalyzes the removal of a penultimate prolyl residue from the N-termini of peptides. In the food vacuole, involved in the final step of host hemoglobin catabolism, by cleaving hemoglobin-derived oligopeptides. In the cytoplasm, may be involved in the last steps of the turnover of ubiquitinated proteins. The chain is Aminopeptidase P from Plasmodium falciparum (isolate 3D7).